The following is a 431-amino-acid chain: MLSDQVTTAELHPSAPLTECETGIYHTFCPISCVAWLYQRVEDSFFLVIGTKTCGYFLQNALGVMIFAEPRYAMAELEEGDISAQFNDYHELRRLCVQIQQDRHPSVIVWIGTCTTEIIKMDLEGMAPTLQAEIGIPIVVARANGLDYAFTQGEDTVLAAMAQRCPDWTPDRTATQSTSSPPLVIFGSVPATVVSQLTFELQRQKVEVTGWLPSARYADLPAVGEDVYACGVNPFLSRTAITLMRRRRCKMIGSPFPIGPDGTRAWIEKICHVFGLETTGLAERERQVWSQLEDYLSLVRGKSAFLMGDNLLEISLARFLIRCGMIVHEVGIPYMDARFQAAELHLLMRTCEAAHVPMPRIVTKPDNFYQVQRMRDVQPDLAITGMAHANPLEARGTGTKWSVELTFWQLHGFASAKDLLELVTRPLRRTH.

Cysteine 29, cysteine 54, and cysteine 114 together coordinate [4Fe-4S] cluster.

This sequence belongs to the BchN/ChlN family. As to quaternary structure, protochlorophyllide reductase is composed of three subunits; ChlL, ChlN and ChlB. Forms a heterotetramer of two ChlB and two ChlN subunits. It depends on [4Fe-4S] cluster as a cofactor.

The protein localises to the plastid. Its subcellular location is the chloroplast. It carries out the reaction chlorophyllide a + oxidized 2[4Fe-4S]-[ferredoxin] + 2 ADP + 2 phosphate = protochlorophyllide a + reduced 2[4Fe-4S]-[ferredoxin] + 2 ATP + 2 H2O. It participates in porphyrin-containing compound metabolism; chlorophyll biosynthesis (light-independent). In terms of biological role, component of the dark-operative protochlorophyllide reductase (DPOR) that uses Mg-ATP and reduced ferredoxin to reduce ring D of protochlorophyllide (Pchlide) to form chlorophyllide a (Chlide). This reaction is light-independent. The NB-protein (ChlN-ChlB) is the catalytic component of the complex. The polypeptide is Light-independent protochlorophyllide reductase subunit N (Nephroselmis olivacea (Green alga)).